Reading from the N-terminus, the 503-residue chain is Probable cytosol aminopeptidase (503 aa).

K270 and D275 together coordinate Mn(2+). K282 is an active-site residue. Mn(2+)-binding residues include D293, D352, and E354. R356 is a catalytic residue.

The protein belongs to the peptidase M17 family. Mn(2+) is required as a cofactor.

It is found in the cytoplasm. It catalyses the reaction Release of an N-terminal amino acid, Xaa-|-Yaa-, in which Xaa is preferably Leu, but may be other amino acids including Pro although not Arg or Lys, and Yaa may be Pro. Amino acid amides and methyl esters are also readily hydrolyzed, but rates on arylamides are exceedingly low.. The catalysed reaction is Release of an N-terminal amino acid, preferentially leucine, but not glutamic or aspartic acids.. Functionally, presumably involved in the processing and regular turnover of intracellular proteins. Catalyzes the removal of unsubstituted N-terminal amino acids from various peptides. In Yersinia enterocolitica serotype O:8 / biotype 1B (strain NCTC 13174 / 8081), this protein is Probable cytosol aminopeptidase.